The following is a 193-amino-acid chain: Penicillin-binding protein activator LpoB (193 aa).

The signal sequence occupies residues Met-1–Gly-16. A lipid anchor (N-palmitoyl cysteine) is attached at Cys-17. The S-diacylglycerol cysteine moiety is linked to residue Cys-17. Residues Gln-23–Val-50 form a disordered region. Residues Pro-37–Pro-46 show a composition bias toward pro residues.

The protein belongs to the LpoB family. As to quaternary structure, interacts with PBP1b.

It localises to the cell outer membrane. Functionally, regulator of peptidoglycan synthesis that is essential for the function of penicillin-binding protein 1B (PBP1b). The chain is Penicillin-binding protein activator LpoB from Proteus mirabilis (strain HI4320).